The following is a 577-amino-acid chain: Torulene dioxygenase (577 aa).

4 residues coordinate Fe(2+): histidine 239, histidine 291, histidine 361, and histidine 570.

Belongs to the carotenoid oxygenase family. Fe(2+) is required as a cofactor.

Its subcellular location is the cytoplasm. The protein resides in the cytosol. It carries out the reaction torulene + O2 = 4'-apo-beta-carotenal + 3-methyl-2-butenal. Its pathway is carotenoid biosynthesis. Its function is as follows. Torulene dioxygenase; part of the pathway that mediates the biosynthesis of neurosporaxanthin, a carboxylic apocarotenoid acting as an essential protective pigments and leading to orange pigmentation. CarT mediates the cleavage of torulene into beta-apo-4'-carotenal, the aldehyde corresponding to the acidic neurosporaxanthin. Is also active on other monocyclic synthetic substrates such as beta-apo-8'-carotenal and beta-apo-10'-carotenal to produce beta-apo-14'-carotenal and retinal(beta-apo-15'-carotenal), respectively. Neurosporaxanthin is synthesized from geranyl-geranyl pyrophosphate (GGPP) through several enzymatic activities. Phytoene synthase activity performed by the bifunctional enzyme carAR first produces phytoene from geranyl-geranyl pyrophosphate (GGPP). The phytoene dehydrogenase carB then introduces 4 desaturations to lead to lycopene which is substrate of the carotene cyclase activity of carAR that leads to the production of gamma-carotene. CarB then performs a 5th desaturation reaction to yield torulene. Torulene is the substrate of the dioxidase carT that breaks the molecule, removing five carbon atoms to yield beta-apo-4'-carotenal, whereas the aldehyde dehydrogenase carD mediates the last step by converting beta-apo-4'-carotenal into neurosporaxanthin. This is Torulene dioxygenase from Fusarium fujikuroi (Bakanae and foot rot disease fungus).